The following is a 60-amino-acid chain: DNA gyrase inhibitor YacG (60 aa).

Zn(2+) contacts are provided by cysteine 3, cysteine 6, cysteine 18, and cysteine 22. A disordered region spans residues proline 38–histidine 60. The span at serine 41–alanine 52 shows a compositional bias: acidic residues.

Belongs to the DNA gyrase inhibitor YacG family. In terms of assembly, interacts with GyrB. Requires Zn(2+) as cofactor.

Inhibits all the catalytic activities of DNA gyrase by preventing its interaction with DNA. Acts by binding directly to the C-terminal domain of GyrB, which probably disrupts DNA binding by the gyrase. The chain is DNA gyrase inhibitor YacG from Ruegeria pomeroyi (strain ATCC 700808 / DSM 15171 / DSS-3) (Silicibacter pomeroyi).